We begin with the raw amino-acid sequence, 171 residues long: uncharacterized protein (171 aa).

The signal sequence occupies residues 1–24 (MIFDSLTMTQSSLSLLLLTGAIFS). The Extracellular segment spans residues 25 to 70 (ISALYLTLFHRCATFSATSDLFLLVPLKFVSRDINDRLKTHYHHSC). Residues 71-91 (LGSPFLCIIFLFISPLLNYHF) form a helical membrane-spanning segment. The Cytoplasmic portion of the chain corresponds to 92-140 (RSLVRPPKIHQKGSIPTLTKNAETRCSHHLKQAAATGEVCKVVVIIKGH). A helical membrane pass occupies residues 141 to 161 (ILKDCSIFFFIIFPLIYPLFI). At 162–171 (NCSSKYNGLQ) the chain is on the extracellular side.

It is found in the membrane. This is an uncharacterized protein from Saccharomyces cerevisiae (strain ATCC 204508 / S288c) (Baker's yeast).